The chain runs to 185 residues: Ubiquitin-conjugating enzyme E2 5 (185 aa).

Residues 1-148 form the UBC core domain; it reads MSSPSKRREM…VKEYCEKYAK (148 aa). Cys85 serves as the catalytic Glycyl thioester intermediate. Residues 146-185 form a disordered region; that stretch reads YAKPRADTEEMSSDDEMSEDEYASDGDDEDDVAIAGKLDP. Residues 154–177 are compositionally biased toward acidic residues; that stretch reads EEMSSDDEMSEDEYASDGDDEDDV.

Belongs to the ubiquitin-conjugating enzyme family. As to expression, expressed in developing ovules, but not in vascular tissues.

It carries out the reaction S-ubiquitinyl-[E1 ubiquitin-activating enzyme]-L-cysteine + [E2 ubiquitin-conjugating enzyme]-L-cysteine = [E1 ubiquitin-activating enzyme]-L-cysteine + S-ubiquitinyl-[E2 ubiquitin-conjugating enzyme]-L-cysteine.. The protein operates within protein modification; protein ubiquitination. Its function is as follows. Accepts the ubiquitin from the E1 complex and catalyzes its covalent attachment to other proteins. The polypeptide is Ubiquitin-conjugating enzyme E2 5 (UBC5) (Arabidopsis thaliana (Mouse-ear cress)).